The sequence spans 434 residues: Beta-glucuronosyltransferase GlcAT14B (434 aa).

At 1-21 the chain is on the cytoplasmic side; the sequence is MKKLKSYYMQVRNQQQSLDRK. The chain crosses the membrane as a signal-anchor for type II membrane protein span at residues 22 to 42; it reads WILPLAIGSICSLFLLLLTNL. The Lumenal portion of the chain corresponds to 43 to 434; that stretch reads ASSSGQTRLI…TENFRPRQCR (392 aa). Asparagine 138, asparagine 187, asparagine 316, and asparagine 392 each carry an N-linked (GlcNAc...) asparagine glycan.

Belongs to the glycosyltransferase 14 family.

The protein localises to the golgi apparatus membrane. In terms of biological role, beta-glucuronosyltransferase involved in the biosynthesis of type II arabinogalactan (AG). Modifies both the beta-1,6-linked galactan and beta-1,3-linked galactan present in type II AG. In Arabidopsis thaliana (Mouse-ear cress), this protein is Beta-glucuronosyltransferase GlcAT14B.